Consider the following 310-residue polypeptide: ADP-L-glycero-D-manno-heptose-6-epimerase (310 aa).

Residues 10 to 11, 31 to 32, K38, K53, 75 to 79, and N92 contribute to the NADP(+) site; these read FI, DN, and EGACS. Residue Y140 is the Proton acceptor of the active site. K144 is a binding site for NADP(+). Residue N169 participates in substrate binding. NADP(+) is bound by residues V170 and K178. Catalysis depends on K178, which acts as the Proton acceptor. Residues S180, H187, 201–204, R209, and Y272 each bind substrate; that span reads FEGS.

Belongs to the NAD(P)-dependent epimerase/dehydratase family. HldD subfamily. As to quaternary structure, homopentamer. NADP(+) is required as a cofactor.

The enzyme catalyses ADP-D-glycero-beta-D-manno-heptose = ADP-L-glycero-beta-D-manno-heptose. It participates in nucleotide-sugar biosynthesis; ADP-L-glycero-beta-D-manno-heptose biosynthesis; ADP-L-glycero-beta-D-manno-heptose from D-glycero-beta-D-manno-heptose 7-phosphate: step 4/4. In terms of biological role, catalyzes the interconversion between ADP-D-glycero-beta-D-manno-heptose and ADP-L-glycero-beta-D-manno-heptose via an epimerization at carbon 6 of the heptose. In Salmonella newport (strain SL254), this protein is ADP-L-glycero-D-manno-heptose-6-epimerase.